The chain runs to 113 residues: uncharacterized protein (113 aa).

The signal sequence occupies residues 1–20 (MMKKSILAFLLLTSSAAALA).

This is an uncharacterized protein from Escherichia coli (strain K12).